Consider the following 391-residue polypeptide: 3-ketoacyl-CoA thiolase (391 aa).

Catalysis depends on C95, which acts as the Acyl-thioester intermediate. Active-site proton acceptor residues include H347 and C377.

It belongs to the thiolase-like superfamily. Thiolase family. Heterotetramer of two alpha chains (FadB) and two beta chains (FadA).

The protein localises to the cytoplasm. The catalysed reaction is an acyl-CoA + acetyl-CoA = a 3-oxoacyl-CoA + CoA. Its pathway is lipid metabolism; fatty acid beta-oxidation. Its function is as follows. Catalyzes the final step of fatty acid oxidation in which acetyl-CoA is released and the CoA ester of a fatty acid two carbons shorter is formed. The polypeptide is 3-ketoacyl-CoA thiolase (Pseudomonas fluorescens (strain Pf0-1)).